The following is a 327-amino-acid chain: Ribose-phosphate pyrophosphokinase (327 aa).

ATP contacts are provided by residues 46–48 (NGE) and 105–106 (RQ). Mg(2+)-binding residues include histidine 139 and aspartate 179. Lysine 203 is a catalytic residue. D-ribose 5-phosphate-binding positions include arginine 205, aspartate 231, and 235–239 (DTGGT).

This sequence belongs to the ribose-phosphate pyrophosphokinase family. Class I subfamily. In terms of assembly, homohexamer. Mg(2+) serves as cofactor.

It is found in the cytoplasm. It catalyses the reaction D-ribose 5-phosphate + ATP = 5-phospho-alpha-D-ribose 1-diphosphate + AMP + H(+). The protein operates within metabolic intermediate biosynthesis; 5-phospho-alpha-D-ribose 1-diphosphate biosynthesis; 5-phospho-alpha-D-ribose 1-diphosphate from D-ribose 5-phosphate (route I): step 1/1. Its function is as follows. Involved in the biosynthesis of the central metabolite phospho-alpha-D-ribosyl-1-pyrophosphate (PRPP) via the transfer of pyrophosphoryl group from ATP to 1-hydroxyl of ribose-5-phosphate (Rib-5-P). The sequence is that of Ribose-phosphate pyrophosphokinase from Mycobacterium leprae (strain TN).